The following is a 1017-amino-acid chain: Semaphorin-6D (1017 aa).

Positions 1-20 (MRVFLLCAYILLLMISQLRA) are cleaved as a signal peptide. Residues 21-606 (VSFPEDDEPL…GESNQMVHMN (586 aa)) lie on the Extracellular side of the membrane. The Sema domain occupies 27-512 (DEPLNTVDYH…FSSCVIRIPL (486 aa)). The N-linked (GlcNAc...) asparagine glycan is linked to Asn-51. 4 disulfide bridges follow: Cys-108-Cys-118, Cys-136-Cys-145, Cys-259-Cys-370, and Cys-284-Cys-329. An N-linked (GlcNAc...) asparagine glycan is attached at Asn-283. 2 N-linked (GlcNAc...) asparagine glycosylation sites follow: Asn-435 and Asn-461. Disulfide bonds link Cys-477–Cys-506, Cys-515–Cys-533, Cys-521–Cys-568, and Cys-525–Cys-541. A PSI domain is found at 514-569 (RCERYGSCKKSCIASRDPYCGWLSQGSCGRVTPGMLAEGYEQDAEFGNTAHLGDCH). The helical transmembrane segment at 607 to 627 (VLITCVFAAFVLGAFIAGVAV) threads the bilayer. The Cytoplasmic segment spans residues 628-1017 (YCYRDMFVRK…SVRPLNKYTY (390 aa)). Residues Ser-667, Ser-678, and Ser-688 each carry the phosphoserine modification. Disordered regions lie at residues 688–719 (SRKE…PTPE), 731–769 (AMKS…GHIP), 783–818 (TSFS…RSVD), and 873–912 (LYSP…HKNS). At Thr-717 the chain carries Phosphothreonine. Basic and acidic residues predominate over residues 734 to 749 (SHSEKAHGHGASRKET). Residues Ser-875, Ser-901, and Ser-927 each carry the phosphoserine modification. The segment covering 875–886 (SPPSTLPRNSPT) has biased composition (polar residues). Residues 965-981 (LQPSLSRQSSYTSNGTL) are compositionally biased toward polar residues. A disordered region spans residues 965-1017 (LQPSLSRQSSYTSNGTLPRTGLKRTPSLKPDVPPKPSFVPQTPSVRPLNKYTY).

The protein belongs to the semaphorin family.

The protein localises to the cell membrane. Its function is as follows. Shows growth cone collapsing activity on dorsal root ganglion (DRG) neurons in vitro. May be a stop signal for the DRG neurons in their target areas, and possibly also for other neurons. May also be involved in the maintenance and remodeling of neuronal connections. Ligand of TREM2 with PLXNA1 as coreceptor in dendritic cells, plays a role in the generation of immune responses and skeletal homeostasis. The sequence is that of Semaphorin-6D (SEMA6D) from Pongo abelii (Sumatran orangutan).